The following is a 157-amino-acid chain: Small ribosomal subunit protein uS7 (157 aa).

The protein belongs to the universal ribosomal protein uS7 family. Part of the 30S ribosomal subunit. Contacts proteins S9 and S11.

One of the primary rRNA binding proteins, it binds directly to 16S rRNA where it nucleates assembly of the head domain of the 30S subunit. Is located at the subunit interface close to the decoding center, probably blocks exit of the E-site tRNA. This chain is Small ribosomal subunit protein uS7, found in Borrelia duttonii (strain Ly).